Reading from the N-terminus, the 280-residue chain is S-methyl-5'-thioadenosine phosphorylase (280 aa).

Phosphate-binding positions include serine 18, 60–61 (RH), and 93–94 (TA). Methionine 196 is a binding site for substrate. Phosphate is bound at residue threonine 197. A substrate-binding site is contributed by 220–222 (DYD).

The protein belongs to the PNP/MTAP phosphorylase family. MTAP subfamily. In terms of assembly, homotrimer.

It is found in the cytoplasm. The protein localises to the nucleus. It catalyses the reaction S-methyl-5'-thioadenosine + phosphate = 5-(methylsulfanyl)-alpha-D-ribose 1-phosphate + adenine. Its pathway is amino-acid biosynthesis; L-methionine biosynthesis via salvage pathway; S-methyl-5-thio-alpha-D-ribose 1-phosphate from S-methyl-5'-thioadenosine (phosphorylase route): step 1/1. Functionally, catalyzes the reversible phosphorylation of S-methyl-5'-thioadenosine (MTA) to adenine and 5-methylthioribose-1-phosphate. Involved in the breakdown of MTA, a major by-product of polyamine biosynthesis. Responsible for the first step in the methionine salvage pathway after MTA has been generated from S-adenosylmethionine. Has broad substrate specificity with 6-aminopurine nucleosides as preferred substrates. The protein is S-methyl-5'-thioadenosine phosphorylase of Ciona intestinalis (Transparent sea squirt).